A 1035-amino-acid polypeptide reads, in one-letter code: Probable LRR receptor-like serine/threonine-protein kinase At1g53440 (1035 aa).

Positions 1–26 (MGFFFSTRKGLLLIIFICLDIFGSNA) are cleaved as a signal peptide. Topologically, residues 27-607 (QLLPEDEVQT…VDTGKPLSNG (581 aa)) are extracellular. 4 N-linked (GlcNAc...) asparagine glycosylation sites follow: N46, N75, N83, and N110. 7 LRR repeats span residues 87–110 (VCRV…EFGN), 111–135 (LTRL…LSQI), 137–158 (LEIL…LGQI), 160–182 (TLTD…LGNL), 183–206 (RSLK…LSNL), 208–232 (NLTN…NWTR), and 234–254 (VRLD…ISNL). N194, N208, and N229 each carry an N-linked (GlcNAc...) asparagine glycan. N-linked (GlcNAc...) asparagine glycosylation is found at N256 and N277. 4 LRR repeats span residues 278–302 (MTNM…IGTS), 303–326 (MTML…TFRS), 328–349 (NAFN…QFIL), and 350–372 (DSKQ…SCNQ). N317, N337, N361, N386, N469, and N559 each carry an N-linked (GlcNAc...) asparagine glycan. A helical transmembrane segment spans residues 608–628 (VVAGIVIAACVAFGLLVLVIL). Topologically, residues 629 to 1035 (RLTGYLGGKE…LDDLTDVEIE (407 aa)) are cytoplasmic. At T656 the chain carries Phosphothreonine. The Protein kinase domain maps to 667 to 948 (FDPENKIGEG…QGKIKVQPPL (282 aa)). ATP-binding positions include 673 to 681 (IGEGGFGPV) and K695. Y740 carries the post-translational modification Phosphotyrosine. The Proton acceptor role is filled by D793. The residue at position 826 (S826) is a Phosphoserine. T827 and T832 each carry phosphothreonine. Residue Y840 is modified to Phosphotyrosine. Positions 969-1035 (LSQDSESQVS…LDDLTDVEIE (67 aa)) are disordered. The span at 972–981 (DSESQVSTYT) shows a compositional bias: polar residues. Positions 1009-1023 (SLLQQEEGNSSSSSR) are enriched in low complexity.

This sequence belongs to the protein kinase superfamily. Ser/Thr protein kinase family.

It is found in the cell membrane. It carries out the reaction L-seryl-[protein] + ATP = O-phospho-L-seryl-[protein] + ADP + H(+). The enzyme catalyses L-threonyl-[protein] + ATP = O-phospho-L-threonyl-[protein] + ADP + H(+). In Arabidopsis thaliana (Mouse-ear cress), this protein is Probable LRR receptor-like serine/threonine-protein kinase At1g53440.